Here is a 384-residue protein sequence, read N- to C-terminus: Epoxyqueuosine reductase (384 aa).

The active-site Proton donor is the Asp144. One can recognise a 4Fe-4S ferredoxin-type domain in the interval 186–218; it reads LPLPVDQPVEEGCGKCVACMTICPTGAIVEPYT. [4Fe-4S] cluster contacts are provided by Cys198, Cys201, Cys204, Cys208, Cys224, Cys251, Cys254, and Cys258.

This sequence belongs to the QueG family. In terms of assembly, monomer. It depends on cob(II)alamin as a cofactor. The cofactor is [4Fe-4S] cluster.

The protein localises to the cytoplasm. The catalysed reaction is epoxyqueuosine(34) in tRNA + AH2 = queuosine(34) in tRNA + A + H2O. Its pathway is tRNA modification; tRNA-queuosine biosynthesis. Catalyzes the conversion of epoxyqueuosine (oQ) to queuosine (Q), which is a hypermodified base found in the wobble positions of tRNA(Asp), tRNA(Asn), tRNA(His) and tRNA(Tyr). This chain is Epoxyqueuosine reductase, found in Salmonella typhimurium (strain LT2 / SGSC1412 / ATCC 700720).